A 288-amino-acid chain; its full sequence is Glucose-1-phosphate thymidylyltransferase (288 aa).

Mg(2+) contacts are provided by D108 and D223.

The protein belongs to the glucose-1-phosphate thymidylyltransferase family. As to quaternary structure, homotetramer. Requires Mg(2+) as cofactor.

It carries out the reaction dTTP + alpha-D-glucose 1-phosphate + H(+) = dTDP-alpha-D-glucose + diphosphate. Catalyzes the formation of dTDP-glucose, from dTTP and glucose 1-phosphate, as well as its pyrophosphorolysis. This is Glucose-1-phosphate thymidylyltransferase (rmlA) from Neisseria gonorrhoeae.